The sequence spans 643 residues: DNA-directed RNA polymerase subunit beta' (643 aa).

Zn(2+) contacts are provided by C83, C85, C98, and C101. Mg(2+) is bound by residues D480, D482, and D484.

The protein belongs to the RNA polymerase beta' chain family. RpoC1 subfamily. As to quaternary structure, in plastids the minimal PEP RNA polymerase catalytic core is composed of four subunits: alpha, beta, beta', and beta''. When a (nuclear-encoded) sigma factor is associated with the core the holoenzyme is formed, which can initiate transcription. Mg(2+) serves as cofactor. The cofactor is Zn(2+).

The protein resides in the plastid. The protein localises to the organellar chromatophore. It catalyses the reaction RNA(n) + a ribonucleoside 5'-triphosphate = RNA(n+1) + diphosphate. DNA-dependent RNA polymerase catalyzes the transcription of DNA into RNA using the four ribonucleoside triphosphates as substrates. The chain is DNA-directed RNA polymerase subunit beta' from Paulinella chromatophora.